Reading from the N-terminus, the 143-residue chain is MRHYEIVFMVHPDQSEQVSGMIQRYTDLINAAEGKIHRLEDWGRRQLAYPINKLHKAHYVLMNIEAPQVVIDELETAFRYNDVVIRNMIMRTKDAVTEASPMAAAKEERRDDRREVKKDVAAAPVEAKEDSVEEKSEEAASEE.

Positions 96–143 are disordered; sequence VTEASPMAAAKEERRDDRREVKKDVAAAPVEAKEDSVEEKSEEAASEE. Positions 105–143 are enriched in basic and acidic residues; the sequence is AKEERRDDRREVKKDVAAAPVEAKEDSVEEKSEEAASEE.

The protein belongs to the bacterial ribosomal protein bS6 family.

In terms of biological role, binds together with bS18 to 16S ribosomal RNA. The protein is Small ribosomal subunit protein bS6 of Colwellia psychrerythraea (strain 34H / ATCC BAA-681) (Vibrio psychroerythus).